We begin with the raw amino-acid sequence, 510 residues long: MKSIILTILDGWGYSENKKGNAIQIADTPTIDKLWNSYPNTLLNASGRDVGLPEGQMGNSEVGHTTIGAGRIINQDLVRISKSIEDRSFFNNEAINSICQKINFYNTKLHLIGLCSNGGVHSHIKHLFALLDIAMRYKIQICIHAITDGRDTSPYGSKIFIEEINNQIQQFNHINICTISGRYYSMDRDCRWARTEKSYNTLLKNTLGFTKDPILMINEYYKKNISDEFIPPTRLHKGSIENNDGIIFFNFRPDRMRQLVHAFTKSTFKGFNTTSFHNLEILTLTQYDPSLDIEVAFPAKKNKNFIGEIIAKYGLKQLRLAETEKYAHVTYFFNGGIEEPFAGEDRQLIPSPKVETYDLDPEMSATKLTESAINAINKNTYKFIVINYANPDMVGHTGNLDATIHAIQKIDKCIKKIWLACQAMNSTLIITSDHGNADYMLDENNEPCTSHSTNPVPFILAEPTNIHTYHLRKNGNLADIAPTILQLLNLNIPNEMNGISLLETKAKNKI.

The Mn(2+) site is built by aspartate 10 and serine 60. Serine 60 (phosphoserine intermediate) is an active-site residue. Residues histidine 121, 150 to 151 (RD), arginine 182, arginine 188, 252 to 255 (RPDR), and lysine 325 contribute to the substrate site. Mn(2+) contacts are provided by aspartate 392, histidine 396, aspartate 433, histidine 434, and histidine 451.

It belongs to the BPG-independent phosphoglycerate mutase family. Mn(2+) is required as a cofactor.

It is found in the plastid. It localises to the chloroplast. It catalyses the reaction (2R)-2-phosphoglycerate = (2R)-3-phosphoglycerate. It participates in carbohydrate degradation; glycolysis; pyruvate from D-glyceraldehyde 3-phosphate: step 3/5. Functionally, catalyzes the interconversion of 2-phosphoglycerate and 3-phosphoglycerate. The sequence is that of 2,3-bisphosphoglycerate-independent phosphoglycerate mutase from Gracilaria tenuistipitata var. liui (Red alga).